A 142-amino-acid polypeptide reads, in one-letter code: Endoribonuclease YbeY (142 aa).

Zn(2+) contacts are provided by H100, H104, and H110.

This sequence belongs to the endoribonuclease YbeY family. It depends on Zn(2+) as a cofactor.

Its subcellular location is the cytoplasm. Functionally, single strand-specific metallo-endoribonuclease involved in late-stage 70S ribosome quality control and in maturation of the 3' terminus of the 16S rRNA. The polypeptide is Endoribonuclease YbeY (Helicobacter pylori (strain G27)).